We begin with the raw amino-acid sequence, 165 residues long: Chorismate pyruvate-lyase (165 aa).

4 residues coordinate substrate: Met-35, Arg-77, Leu-115, and Glu-156.

The protein belongs to the UbiC family. In terms of assembly, monomer.

Its subcellular location is the cytoplasm. It catalyses the reaction chorismate = 4-hydroxybenzoate + pyruvate. Its pathway is cofactor biosynthesis; ubiquinone biosynthesis. Removes the pyruvyl group from chorismate, with concomitant aromatization of the ring, to provide 4-hydroxybenzoate (4HB) for the ubiquinone pathway. The sequence is that of Chorismate pyruvate-lyase from Salmonella arizonae (strain ATCC BAA-731 / CDC346-86 / RSK2980).